A 1252-amino-acid chain; its full sequence is ATP-dependent helicase/nuclease subunit A (1252 aa).

A UvrD-like helicase ATP-binding domain is found at Thr6 to Arg489. Ala27–Thr34 lines the ATP pocket. The UvrD-like helicase C-terminal domain maps to Ala523 to Gly811.

It belongs to the helicase family. AddA subfamily. In terms of assembly, heterodimer of AddA and AddB/RexB. The cofactor is Mg(2+).

It carries out the reaction Couples ATP hydrolysis with the unwinding of duplex DNA by translocating in the 3'-5' direction.. The catalysed reaction is ATP + H2O = ADP + phosphate + H(+). The heterodimer acts as both an ATP-dependent DNA helicase and an ATP-dependent, dual-direction single-stranded exonuclease. Recognizes the chi site generating a DNA molecule suitable for the initiation of homologous recombination. The AddA nuclease domain is required for chi fragment generation; this subunit has the helicase and 3' -&gt; 5' nuclease activities. The protein is ATP-dependent helicase/nuclease subunit A of Clostridium acetobutylicum (strain ATCC 824 / DSM 792 / JCM 1419 / IAM 19013 / LMG 5710 / NBRC 13948 / NRRL B-527 / VKM B-1787 / 2291 / W).